Here is a 424-residue protein sequence, read N- to C-terminus: GTPase Obg (424 aa).

The 158-residue stretch at 1 to 158 folds into the Obg domain; that stretch reads MFYDQAKIYV…RNLLLELKLL (158 aa). An OBG-type G domain is found at 159–329; sequence ADVGLVGFPN…LVYAAAKALP (171 aa). Residues 165-172, 190-194, 212-215, 282-285, and 310-312 contribute to the GTP site; these read GFPNVGKS, FTTLV, DIPG, NKMD, and SAA. Mg(2+) is bound by residues Ser172 and Thr192. The region spanning 347–424 is the OCT domain; sequence TQASAPHRFE…IAGIEFEWEE (78 aa).

Belongs to the TRAFAC class OBG-HflX-like GTPase superfamily. OBG GTPase family. Monomer. Mg(2+) serves as cofactor.

The protein resides in the cytoplasm. Its function is as follows. An essential GTPase which binds GTP, GDP and possibly (p)ppGpp with moderate affinity, with high nucleotide exchange rates and a fairly low GTP hydrolysis rate. Plays a role in control of the cell cycle, stress response, ribosome biogenesis and in those bacteria that undergo differentiation, in morphogenesis control. This chain is GTPase Obg, found in Desulfitobacterium hafniense (strain Y51).